A 365-amino-acid chain; its full sequence is Adenosine deaminase (365 aa).

The Zn(2+) site is built by His19 and His21. His21, Asp23, and Gly181 together coordinate substrate. His208 contacts Zn(2+). Glu211 serves as the catalytic Proton donor. Asp300 is a Zn(2+) binding site.

This sequence belongs to the metallo-dependent hydrolases superfamily. Adenosine and AMP deaminases family. Adenosine deaminase subfamily. Requires Zn(2+) as cofactor.

The catalysed reaction is adenosine + H2O + H(+) = inosine + NH4(+). The enzyme catalyses 2'-deoxyadenosine + H2O + H(+) = 2'-deoxyinosine + NH4(+). In terms of biological role, catalyzes the hydrolytic deamination of adenosine and 2-deoxyadenosine. The polypeptide is Adenosine deaminase (Mycobacterium tuberculosis (strain ATCC 25177 / H37Ra)).